A 63-amino-acid polypeptide reads, in one-letter code: Crotasin (63 aa).

The first 22 residues, 1-22 (MKILYLLSAFLFLAFLSESGNA), serve as a signal peptide directing secretion. 3 cysteine pairs are disulfide-bonded: C26/C56, C33/C50, and C38/C57.

As to expression, highly expressed in pancreas, heart, liver, brain and kidney. Expressed to a low extent in the venom gland.

It localises to the secreted. The protein is Crotasin of Crotalus durissus terrificus (South American rattlesnake).